Reading from the N-terminus, the 766-residue chain is Oligopeptide transporter 7 (766 aa).

A disordered region spans residues methionine 1–arginine 58. A compositionally biased stretch (acidic residues) spans aspartate 45–asparagine 54. 15 consecutive transmembrane segments (helical) span residues methionine 79–tyrosine 99, leucine 104–alanine 124, isoleucine 154–valine 174, phenylalanine 184–isoleucine 204, phenylalanine 247–isoleucine 267, isoleucine 287–serine 307, valine 324–valine 344, leucine 390–methionine 410, valine 446–cysteine 466, tryptophan 477–isoleucine 497, isoleucine 509–phenylalanine 529, phenylalanine 561–tryptophan 581, leucine 627–leucine 647, alanine 676–phenylalanine 696, and valine 709–leucine 729.

Belongs to the oligopeptide OPT transporter (TC 2.A.67.1) family. Expressed in the major and the first-order veins and in the hydathodes of the leaves. In the roots, expressed in circular zones surrounding lateral root primordia and in some part of the root epidermis. Expressed also in the sepals and the cortical tissues of the stem, but not in the conducting bundles, the petals or the reproductive tissues.

Its subcellular location is the membrane. Functionally, involved in the translocation of tetra- and pentapeptides across the cellular membrane in an energy-dependent manner. May also transport cadmium complexes. The chain is Oligopeptide transporter 7 (OPT7) from Arabidopsis thaliana (Mouse-ear cress).